Consider the following 127-residue polypeptide: Large ribosomal subunit protein bL12 (127 aa).

This sequence belongs to the bacterial ribosomal protein bL12 family. Homodimer. Part of the ribosomal stalk of the 50S ribosomal subunit. Forms a multimeric L10(L12)X complex, where L10 forms an elongated spine to which 2 to 4 L12 dimers bind in a sequential fashion. Binds GTP-bound translation factors.

Forms part of the ribosomal stalk which helps the ribosome interact with GTP-bound translation factors. Is thus essential for accurate translation. This is Large ribosomal subunit protein bL12 from Acidiphilium cryptum (strain JF-5).